Reading from the N-terminus, the 258-residue chain is MLLVIDVGNTNTVIGVYHDGELEYHWRIETSRHKTEDEFGMLLRSLFEHSGLMFEQIEGIIISSVVPPIMFSLERMCTKYFHIEPQVVGPGMKTGLNIKYDNPKEVGADRIVNAVAAIQQYGAPLIVVDFGTATTYCYIDENKQYMGGAIAPGITISTEALYSRAAKLPRIEIARPDNIIGKNTVSAMQSGILFGYVGQVEGIVKRMKWQATQEPKVIATGGLASLIANESDCIDIVDPFLTLKGLEIIYERNRVGHV.

6 to 13 (DVGNTNTV) contacts ATP. Substrate contacts are provided by residues Y100 and 107–110 (GADR). The active-site Proton acceptor is the D109. K(+) is bound at residue D129. Position 132 (T132) interacts with ATP. T184 is a substrate binding site.

Belongs to the type III pantothenate kinase family. Homodimer. Requires NH4(+) as cofactor. K(+) is required as a cofactor.

The protein localises to the cytoplasm. It catalyses the reaction (R)-pantothenate + ATP = (R)-4'-phosphopantothenate + ADP + H(+). It participates in cofactor biosynthesis; coenzyme A biosynthesis; CoA from (R)-pantothenate: step 1/5. In terms of biological role, catalyzes the phosphorylation of pantothenate (Pan), the first step in CoA biosynthesis. The polypeptide is Type III pantothenate kinase (Bacillus velezensis (strain DSM 23117 / BGSC 10A6 / LMG 26770 / FZB42) (Bacillus amyloliquefaciens subsp. plantarum)).